The primary structure comprises 349 residues: Ferredoxin--NADP reductase (349 aa).

FAD is bound by residues Asp-43, Gln-51, Tyr-56, Val-96, Phe-131, Asp-295, and Ser-336.

It belongs to the ferredoxin--NADP reductase type 2 family. As to quaternary structure, homodimer. FAD serves as cofactor.

The catalysed reaction is 2 reduced [2Fe-2S]-[ferredoxin] + NADP(+) + H(+) = 2 oxidized [2Fe-2S]-[ferredoxin] + NADPH. In Paraburkholderia phytofirmans (strain DSM 17436 / LMG 22146 / PsJN) (Burkholderia phytofirmans), this protein is Ferredoxin--NADP reductase.